The primary structure comprises 311 residues: MDKDWFEVSVITSSEAVEAVTGILYNTPVKGVAIEDSKDVEFKKKHPGDWDYFDESLLNVKDGAVIKAYYKDDHNFDESVKYIEESIDKLSEFGINKGEGKVFVNKVNETDWENNWKKYYKPTKIGARIVVKPLWEEYTPKDYELMLNMDPGMAFGTGTHETTRMCIQALERYVNEDAEVFDIGTGSGILAIAAAKLNAKKVLGVDLDSVAVKAAKENIQYNNVNNIEILHGNLMEVVQGKADIIVANIIADVINILIPDINKFLKTDGYFISSGIIKDRAEDVIENLKKNKFEIIEVNNQGEWICIVAKL.

S-adenosyl-L-methionine is bound by residues threonine 163, glycine 184, aspartate 206, and asparagine 248.

This sequence belongs to the methyltransferase superfamily. PrmA family.

It localises to the cytoplasm. The catalysed reaction is L-lysyl-[protein] + 3 S-adenosyl-L-methionine = N(6),N(6),N(6)-trimethyl-L-lysyl-[protein] + 3 S-adenosyl-L-homocysteine + 3 H(+). In terms of biological role, methylates ribosomal protein L11. This chain is Ribosomal protein L11 methyltransferase, found in Clostridium acetobutylicum (strain ATCC 824 / DSM 792 / JCM 1419 / IAM 19013 / LMG 5710 / NBRC 13948 / NRRL B-527 / VKM B-1787 / 2291 / W).